A 139-amino-acid polypeptide reads, in one-letter code: Small ribosomal subunit protein uS12m (139 aa).

The interval 1-21 is disordered; the sequence is MLSTLYQNDLKKKRNRRRNRS. Over residues 11-20 the composition is skewed to basic residues; sequence KKKRNRRRNR.

Belongs to the universal ribosomal protein uS12 family.

The protein resides in the mitochondrion. Protein S12 is involved in the translation initiation step. This is Small ribosomal subunit protein uS12m (RPS12) from Paramecium tetraurelia.